A 72-amino-acid chain; its full sequence is UPF0270 protein PM1156 (72 aa).

The protein belongs to the UPF0270 family.

The polypeptide is UPF0270 protein PM1156 (Pasteurella multocida (strain Pm70)).